A 1676-amino-acid chain; its full sequence is Anucleate primary sterigmata protein A (1676 aa).

Polar residues predominate over residues 1–11 (MEDSQRGNASM). The segment at 1–35 (MEDSQRGNASMMSMMDDPFVVSPEGARDPPSTNQY) is disordered. Positions 51 to 127 (AQAKRALEAH…EIGQETARAF (77 aa)) form a coiled coil. 7 disordered regions span residues 160–180 (QATN…NQSN), 353–394 (RLRQ…TPRH), 439–712 (DEVE…SRRP), 1027–1050 (GTST…PVEP), 1176–1201 (PLGA…DQGA), 1220–1270 (VRPL…QASS), and 1297–1354 (PASA…RRSS). Residues 163 to 172 (NSPSKVSVPS) are compositionally biased toward low complexity. 2 coiled-coil regions span residues 193–359 (TSLL…QQEA) and 408–453 (HAHR…AANG). 5 stretches are compositionally biased toward basic and acidic residues: residues 355–370 (RQQE…RPHD), 439–448 (DEVEQRRRDS), 461–470 (TKAETRKPAR), 479–489 (KKAEVEIHDSD), and 503–522 (ASND…RSDA). The span at 593–602 (SYYSTASTSA) shows a compositional bias: low complexity. Polar residues predominate over residues 609–620 (DPGTPSISQFST). Over residues 623-636 (YRLRKKRSVLRKIR) the composition is skewed to basic residues. The segment covering 647–664 (SRPSSARESPSTSFTRDT) has biased composition (polar residues). Residues 678 to 687 (AEVDGDEDDF) are compositionally biased toward acidic residues. Residues 1032–1042 (TVEFSVSSISS) show a composition bias toward low complexity. The span at 1191 to 1201 (SGSSNQADQGA) shows a compositional bias: polar residues. The segment covering 1314–1341 (RASSQQRPRTPNESALQVGSAKTTTSRA) has biased composition (polar residues). The PH domain occupies 1393–1504 (QTMIGEFLWK…WFNALSYLLV (112 aa)). Residues 1511-1524 (EEAENGVTLDDIDE) are compositionally biased toward acidic residues. Disordered stretches follow at residues 1511-1589 (EEAE…QASS) and 1654-1676 (HDVS…HSHH). Composition is skewed to polar residues over residues 1534–1548 (RQTA…QSRG) and 1580–1589 (YSDQARQASS).

The protein localises to the membrane. Its function is as follows. Required for nuclear positioning and completion of asexual development. The protein is Anucleate primary sterigmata protein A (apsA) of Emericella nidulans (strain FGSC A4 / ATCC 38163 / CBS 112.46 / NRRL 194 / M139) (Aspergillus nidulans).